The following is a 122-amino-acid chain: Large ribosomal subunit protein bL20 (122 aa).

The protein belongs to the bacterial ribosomal protein bL20 family.

Its function is as follows. Binds directly to 23S ribosomal RNA and is necessary for the in vitro assembly process of the 50S ribosomal subunit. It is not involved in the protein synthesizing functions of that subunit. The chain is Large ribosomal subunit protein bL20 from Saccharopolyspora erythraea (strain ATCC 11635 / DSM 40517 / JCM 4748 / NBRC 13426 / NCIMB 8594 / NRRL 2338).